A 511-amino-acid chain; its full sequence is Cytochrome P450 4B1 (511 aa).

E315 contributes to the heme binding site. A Phosphoserine modification is found at S436. Position 453 (C453) interacts with heme.

The protein belongs to the cytochrome P450 family. The cofactor is heme. In terms of tissue distribution, detected in the liver and lung (at protein level).

The protein resides in the endoplasmic reticulum membrane. It localises to the microsome membrane. The catalysed reaction is an organic molecule + reduced [NADPH--hemoprotein reductase] + O2 = an alcohol + oxidized [NADPH--hemoprotein reductase] + H2O + H(+). Functionally, cytochromes P450 are a group of heme-thiolate monooxygenases. In liver microsomes, this enzyme is involved in an NADPH-dependent electron transport pathway. It oxidizes a variety of structurally unrelated compounds, including steroids, fatty acids, and xenobiotics. This is Cytochrome P450 4B1 (CYP4B1) from Homo sapiens (Human).